A 574-amino-acid chain; its full sequence is R-linalool synthase, chloroplastic (574 aa).

The N-terminal 40 residues, 1–40 (MSCARITVTLPYRSAKTSIQRGITHCPALLRPRFSACTPL), are a transit peptide targeting the chloroplast. The segment covering 52 to 61 (INGDNSPLKN) has biased composition (polar residues). A disordered region spans residues 52-71 (INGDNSPLKNTHQHVEERSS). Residues R287, D324, D328, R467, and D470 each coordinate (2E)-geranyl diphosphate. Residues D324 and D328 each coordinate Mg(2+). Positions 324 to 328 (DDIFD) match the DDXXD motif motif. D470, T474, and E478 together coordinate Mg(2+).

Belongs to the terpene synthase family. Tpsb subfamily. The cofactor is Mg(2+). Mn(2+) is required as a cofactor.

It localises to the plastid. The protein localises to the chloroplast. The catalysed reaction is (2E)-geranyl diphosphate + H2O = (R)-linalool + diphosphate. The protein operates within secondary metabolite biosynthesis; terpenoid biosynthesis. Functionally, monoterpene synthase that catalyzes the formation of (3R)-linalool from geranyl diphosphate. This is R-linalool synthase, chloroplastic (LIS) from Ocimum basilicum (Sweet basil).